The chain runs to 448 residues: Porin AaxA (448 aa).

A signal peptide spans 1 to 24 (MASFRSSLLSALCAYGMMVMPAYA).

Belongs to the OprB family.

It is found in the cell outer membrane. Facilitates L-arginine uptake, as part of the AaxABC system. The arginine uptake by the bacterium in the macrophage may be a virulence factor against the host innate immune response. The protein is Porin AaxA (aaxA) of Chlamydia abortus (strain DSM 27085 / S26/3) (Chlamydophila abortus).